The primary structure comprises 344 residues: DNA fragmentation factor subunit beta (344 aa).

A CIDE-N domain is found at 7–83; the sequence is QPKCVKLRAL…LLTAGETWHG (77 aa).

In terms of assembly, heterodimer of DFFA and DFFB. Interacts with H1-1.

The protein resides in the cytoplasm. It is found in the nucleus. Its activity is regulated as follows. Inhibited by DFFA (DFF45). Its function is as follows. Nuclease that induces DNA fragmentation and chromatin condensation during apoptosis. Degrades naked DNA and induces apoptotic morphology. The protein is DNA fragmentation factor subunit beta (Dffb) of Mus musculus (Mouse).